Here is a 356-residue protein sequence, read N- to C-terminus: Iron-regulated protein A (356 aa).

An N-terminal signal peptide occupies residues methionine 1–alanine 44. Hydrophilic regions lie at residues glutamine 75 to glutamate 145 and glycine 240 to arginine 310.

In terms of assembly, the iron-regulated protein A is one unit of the protein complex CPVI-4, which is synthesized under iron deficient conditions.

It localises to the cell inner membrane. In terms of biological role, irpA occurs under iron-deficient growth conditions in cyanobacterium Synechococcus and disappears in cells recovering from iron starvation. It seems to be involved in iron acquisition, uptake or storage. This is Iron-regulated protein A (irpA) from Synechococcus elongatus (strain ATCC 33912 / PCC 7942 / FACHB-805) (Anacystis nidulans R2).